Here is a 160-residue protein sequence, read N- to C-terminus: ATP synthase subunit b 3 (160 aa).

The helical transmembrane segment at 5–25 (PTFWVLVAFVLFVAAVWRIAA) threads the bilayer.

This sequence belongs to the ATPase B chain family. F-type ATPases have 2 components, F(1) - the catalytic core - and F(0) - the membrane proton channel. F(1) has five subunits: alpha(3), beta(3), gamma(1), delta(1), epsilon(1). F(0) has three main subunits: a(1), b(2) and c(10-14). The alpha and beta chains form an alternating ring which encloses part of the gamma chain. F(1) is attached to F(0) by a central stalk formed by the gamma and epsilon chains, while a peripheral stalk is formed by the delta and b chains.

It localises to the cell inner membrane. Its function is as follows. F(1)F(0) ATP synthase produces ATP from ADP in the presence of a proton or sodium gradient. F-type ATPases consist of two structural domains, F(1) containing the extramembraneous catalytic core and F(0) containing the membrane proton channel, linked together by a central stalk and a peripheral stalk. During catalysis, ATP synthesis in the catalytic domain of F(1) is coupled via a rotary mechanism of the central stalk subunits to proton translocation. In terms of biological role, component of the F(0) channel, it forms part of the peripheral stalk, linking F(1) to F(0). In Rhodospirillum centenum (strain ATCC 51521 / SW), this protein is ATP synthase subunit b 3.